The following is a 615-amino-acid chain: DNA mismatch repair protein MutL (615 aa).

Residues 363 to 397 (FAEPAVREPVAPRYTPAPASGSRPAAPWPNAQPGY) form a disordered region. Low complexity predominate over residues 378–391 (PAPASGSRPAAPWP).

Belongs to the DNA mismatch repair MutL/HexB family.

Functionally, this protein is involved in the repair of mismatches in DNA. It is required for dam-dependent methyl-directed DNA mismatch repair. May act as a 'molecular matchmaker', a protein that promotes the formation of a stable complex between two or more DNA-binding proteins in an ATP-dependent manner without itself being part of a final effector complex. This Escherichia coli O157:H7 (strain EC4115 / EHEC) protein is DNA mismatch repair protein MutL.